We begin with the raw amino-acid sequence, 379 residues long: Sterol 24-C-methyltransferase erg-4 (379 aa).

It belongs to the class I-like SAM-binding methyltransferase superfamily. Erg6/SMT family.

The enzyme catalyses lanosterol + S-adenosyl-L-methionine = eburicol + S-adenosyl-L-homocysteine + H(+). It participates in steroid metabolism; ergosterol biosynthesis. In terms of biological role, catalyzes the methyl transfer from S-adenosyl-methionine to the C-24 of lanosterol to form eburicol. In Neurospora crassa (strain ATCC 24698 / 74-OR23-1A / CBS 708.71 / DSM 1257 / FGSC 987), this protein is Sterol 24-C-methyltransferase erg-4.